Reading from the N-terminus, the 156-residue chain is ATP synthase subunit b (156 aa).

Residues 7-27 form a helical membrane-spanning segment; that stretch reads LIGQTVAFIIFVWFCMKFVWP.

The protein belongs to the ATPase B chain family. As to quaternary structure, F-type ATPases have 2 components, F(1) - the catalytic core - and F(0) - the membrane proton channel. F(1) has five subunits: alpha(3), beta(3), gamma(1), delta(1), epsilon(1). F(0) has three main subunits: a(1), b(2) and c(10-14). The alpha and beta chains form an alternating ring which encloses part of the gamma chain. F(1) is attached to F(0) by a central stalk formed by the gamma and epsilon chains, while a peripheral stalk is formed by the delta and b chains.

The protein resides in the cell inner membrane. Functionally, f(1)F(0) ATP synthase produces ATP from ADP in the presence of a proton or sodium gradient. F-type ATPases consist of two structural domains, F(1) containing the extramembraneous catalytic core and F(0) containing the membrane proton channel, linked together by a central stalk and a peripheral stalk. During catalysis, ATP synthesis in the catalytic domain of F(1) is coupled via a rotary mechanism of the central stalk subunits to proton translocation. Its function is as follows. Component of the F(0) channel, it forms part of the peripheral stalk, linking F(1) to F(0). This is ATP synthase subunit b from Shewanella sp. (strain ANA-3).